A 480-amino-acid polypeptide reads, in one-letter code: Gasdermin-C2 (480 aa).

The tract at residues 1-226 (MGYSFDRASK…TCVILPSATK (226 aa)) is triggers pyroptosis.

It belongs to the gasdermin family. In terms of assembly, homooligomer; homooligomeric ring-shaped pore complex containing 27-28 subunits when inserted in the membrane. Post-translationally, cleavage by CASP8 relieves autoinhibition by releasing the N-terminal moiety (Gasdermin-C2, N-terminal) that initiates pyroptosis. Palmitoylated.

It localises to the cytoplasm. It is found in the cytosol. The protein localises to the cell membrane. Its activity is regulated as follows. The full-length protein before cleavage is inactive: intramolecular interactions between N- and C-terminal domains mediate autoinhibition in the absence of activation signal. The intrinsic pyroptosis-inducing activity is carried by the released N-terminal moiety (Gasdermin-C2, N-terminal) following cleavage by caspase CASP8 in response to type-2 immunity following worm infection. In terms of biological role, this form constitutes the precursor of the pore-forming protein: upon cleavage, the released N-terminal moiety (Gasdermin-C2, N-terminal) binds to membranes and forms pores, triggering pyroptosis. Functionally, pore-forming protein that causes membrane permeabilization and pyroptosis in response to type-2 immunity. Produced by the cleavage of gasdermin-C2 in response to type-2 immunity following worm infection. After cleavage, moves to the plasma membrane where it strongly binds to membrane inner leaflet lipids. Homooligomerizes within the membrane and forms pores of 10-15 nanometers (nm) of inner diameter, triggering pyroptosis and lytic cell death in enterocytes. This is Gasdermin-C2 from Mus musculus (Mouse).